Here is a 163-residue protein sequence, read N- to C-terminus: Calcium-binding protein 2 (163 aa).

G2 carries the N-myristoyl glycine lipid modification. 4 EF-hand domains span residues 21-56, 72-89, 95-130, and 132-163; these read EEIE…LGYM, GKVD…KLLA, IGVR…LLGE, and LSQR…MMSR. Positions 34, 36, 38, 40, and 45 each coordinate Ca(2+). 9 residues coordinate Ca(2+): D108, N110, D112, C114, E119, D145, N147, D149, and E156.

It localises to the cytoplasm. The protein localises to the perinuclear region. It is found in the cell membrane. The protein resides in the golgi apparatus. Required for sound encoding at inner hair cells (IHCs) synapses, likely via inhibition of the inactivation of voltage-gated calcium channel of type 1.3 (Cav1.3) in the IHCs. Required for the normal transfer of light signals through the retina. The protein is Calcium-binding protein 2 (CABP2) of Bos taurus (Bovine).